We begin with the raw amino-acid sequence, 216 residues long: Snake venom metalloproteinase HT-1 (216 aa).

Residues 8-94 enclose the Disintegrin domain; sequence PPVCGNELLE…DCPMDDFHRN (87 aa). Valine 10, asparagine 13, leucine 15, glutamate 17, glutamate 20, and aspartate 23 together coordinate Ca(2+). 14 disulfides stabilise this stretch: cysteine 11/cysteine 40, cysteine 22/cysteine 35, cysteine 24/cysteine 30, cysteine 34/cysteine 57, cysteine 48/cysteine 54, cysteine 53/cysteine 79, cysteine 66/cysteine 86, cysteine 73/cysteine 105, cysteine 98/cysteine 110, cysteine 117/cysteine 167, cysteine 132/cysteine 178, cysteine 145/cysteine 155, cysteine 162/cysteine 204, and cysteine 198/cysteine 209. The D/ECD-tripeptide motif lies at 72–74; the sequence is ECD. Asparagine 175 carries an N-linked (GlcNAc...) asparagine glycan.

The protein belongs to the venom metalloproteinase (M12B) family. P-III subfamily. P-IIIa sub-subfamily. Monomer. It depends on Zn(2+) as a cofactor. As to expression, expressed by the venom gland.

The protein resides in the secreted. In terms of biological role, zinc protease from snake venom that induces hemorrhage. The chain is Snake venom metalloproteinase HT-1 from Crotalus ruber ruber (Red diamond rattlesnake).